The chain runs to 343 residues: MTKTMLRALKGETLPTPPIWLMRQAGRYLPEYRATRAQAGDFLSLCYTPDLAAEVTLQPIRRYGFDAAILFADILLLPQALGADLWFETGEGPRMSTITDMEGVTALKGRDDIHETLAPVYETCRILARELPKETTFIGFAGMPWTVATYMIAGRGSKDQAAAHKLKDTDRPAFEALMDRVTEATIEYLAKQVEAGCEVVKLFDSWAGSLKGQDFEDFAVAPAKRIVSELKARFPGLPVIAFPREAGEGYIGFAEKTGADCVAIDNSVSPEWAAEKVQAGRTCVQGNLDPKYMVTGGEELVQATKRVVEAFRNGPHIFNLGHGITPEADPENVTLLVETIRGK.

Substrate contacts are provided by residues 23 to 27 (RQAGR), D73, Y150, S205, and H322.

This sequence belongs to the uroporphyrinogen decarboxylase family. As to quaternary structure, homodimer.

It is found in the cytoplasm. The enzyme catalyses uroporphyrinogen III + 4 H(+) = coproporphyrinogen III + 4 CO2. Its pathway is porphyrin-containing compound metabolism; protoporphyrin-IX biosynthesis; coproporphyrinogen-III from 5-aminolevulinate: step 4/4. Catalyzes the decarboxylation of four acetate groups of uroporphyrinogen-III to yield coproporphyrinogen-III. This Cereibacter sphaeroides (strain ATCC 17029 / ATH 2.4.9) (Rhodobacter sphaeroides) protein is Uroporphyrinogen decarboxylase.